The following is a 111-amino-acid chain: 2Fe-2S ferredoxin (111 aa).

In terms of domain architecture, 2Fe-2S ferredoxin-type spans 2–104 (PKIVILPHQD…DLVVEIPRYT (103 aa)). [2Fe-2S] cluster is bound by residues Cys-42, Cys-48, Cys-51, and Cys-87.

The protein belongs to the adrenodoxin/putidaredoxin family. Requires [2Fe-2S] cluster as cofactor.

Functionally, ferredoxin are iron-sulfur proteins that transfer electrons in a wide variety of metabolic reactions. Although the function of this ferredoxin is unknown it is probable that it has a role as a cellular electron transfer protein. Involved in the in vivo assembly of the Fe-S clusters in a wide variety of iron-sulfur proteins. The chain is 2Fe-2S ferredoxin (fdx) from Escherichia coli O157:H7.